The sequence spans 724 residues: 1,3-beta-galactosyl-N-acetylhexosamine phosphorylase Cphy3030 (724 aa).

The active-site Proton donor is aspartate 316.

Belongs to the glycoside hydrolase 112 family.

It catalyses the reaction beta-D-galactosyl-(1-&gt;3)-N-acetyl-D-glucosamine + phosphate = alpha-D-galactose 1-phosphate + N-acetyl-D-glucosamine. Reversibly phosphorolyzes beta-D-galactopyranosyl-(1-&gt;3)-N-acetyl-D-glucosamine to form alpha-D-galactopyranose 1-phosphate and acetyl-D-glucosamine. Active towards galacto-N-biose and lacto-N-biose. Does not phosphorolyze galacto-N-tetraose or lacto-N-tetraose. In the reverse reaction has activity toward N-acetyl-D-glucosamine and N-acetyl-D-galactosamine, but not L-rhamnose, D-glucose or D-galactose. This chain is 1,3-beta-galactosyl-N-acetylhexosamine phosphorylase Cphy3030, found in Lachnoclostridium phytofermentans (strain ATCC 700394 / DSM 18823 / ISDg) (Clostridium phytofermentans).